Consider the following 662-residue polypeptide: Zinc finger protein 17 (662 aa).

The KRAB domain maps to 8–101 (MVFEDVAIHF…LLKDILHLAE (94 aa)). 16 C2H2-type zinc fingers span residues 190–212 (YSCTQCGKDFCHQHTLFEHQKIH), 218–240 (YECSECGKLFRYNSDLIKHQRNH), 246–268 (YKCSECGKAFSLKYNVVQHQKIH), 274–296 (YECSECGKAFLRKSHLLQHQRIH), 302–324 (YVCSECGKAFLTQAHLVGHQKIH), 358–380 (FYCCECGKFFMDSCTLIIHQRVH), 386–408 (YECNECGKFFRYRSTLIRHQKVH), 414–436 (YECSECGKFFMDTSTLIIHQRVH), 442–464 (YECNKCGKFFRYCFTLNRHQRVH), 470–492 (YECSECGKFFVDSCTLKSHQRVH), 498–520 (FECSICGKSFRCRSTLDTHQRIH), 526–548 (YECSECGKFFRHNSNHIRHRRNH), 554–576 (FECTECGRVFSQNSHLIRHQKVH), 582–604 (YKCSKCGKFFMDSSTLISHERVH), 610–632 (YECSECGKVFRYNSSLIKHRRIH), and 638–660 (YQCSECGRVFNQNSHLIQHQKVH).

This sequence belongs to the krueppel C2H2-type zinc-finger protein family.

The protein resides in the nucleus. May be involved in transcriptional regulation. In Homo sapiens (Human), this protein is Zinc finger protein 17 (ZNF17).